A 430-amino-acid chain; its full sequence is Adenylosuccinate synthetase (430 aa).

Residues 12–18 (GDEGKGK) and 40–42 (GHT) contribute to the GTP site. Asp-13 serves as the catalytic Proton acceptor. Mg(2+) contacts are provided by Asp-13 and Gly-40. Residues 13–16 (DEGK), 38–41 (NAGH), Thr-128, Arg-142, Gln-223, Thr-238, and Arg-302 each bind IMP. His-41 serves as the catalytic Proton donor. 298–304 (TTTGRPR) is a binding site for substrate. Residues Arg-304, 330–332 (SID), and 413–415 (SVG) each bind GTP.

Belongs to the adenylosuccinate synthetase family. Homodimer. Requires Mg(2+) as cofactor.

The protein localises to the cytoplasm. It carries out the reaction IMP + L-aspartate + GTP = N(6)-(1,2-dicarboxyethyl)-AMP + GDP + phosphate + 2 H(+). It functions in the pathway purine metabolism; AMP biosynthesis via de novo pathway; AMP from IMP: step 1/2. Its function is as follows. Plays an important role in the de novo pathway of purine nucleotide biosynthesis. Catalyzes the first committed step in the biosynthesis of AMP from IMP. This is Adenylosuccinate synthetase from Lactococcus lactis subsp. cremoris (strain SK11).